A 634-amino-acid polypeptide reads, in one-letter code: Calcium up-regulated protein D (634 aa).

The interval 1–23 (MINIEDISKSSNQSEEKQLKSTS) is disordered. 2 Ricin B-type lectin domains span residues 27 to 146 (KPKY…WTTF) and 117 to 250 (PGNG…WGIN).

It belongs to the cup family.

Its subcellular location is the cytoplasm. It localises to the membrane. Functionally, may play an important role in stabilizing and/or regulating the cell membrane during Ca(2+) stress or certain stages of development. The chain is Calcium up-regulated protein D (cupD) from Dictyostelium discoideum (Social amoeba).